A 245-amino-acid chain; its full sequence is tRNA pseudouridine synthase A (245 aa).

Residue D52 is the Nucleophile of the active site. Substrate is bound at residue Y111.

The protein belongs to the tRNA pseudouridine synthase TruA family. As to quaternary structure, homodimer.

The catalysed reaction is uridine(38/39/40) in tRNA = pseudouridine(38/39/40) in tRNA. In terms of biological role, formation of pseudouridine at positions 38, 39 and 40 in the anticodon stem and loop of transfer RNAs. This Rickettsia prowazekii (strain Madrid E) protein is tRNA pseudouridine synthase A.